Consider the following 270-residue polypeptide: Hemin import ATP-binding protein HmuV (270 aa).

The 238-residue stretch at 5 to 242 (LEAEAATYSV…SLINRVFDIE (238 aa)) folds into the ABC transporter domain. 37–44 (GPNGAGKS) lines the ATP pocket.

The protein belongs to the ABC transporter superfamily. Heme (hemin) importer (TC 3.A.1.14.5) family. As to quaternary structure, the complex is composed of two ATP-binding proteins (HmuV), two transmembrane proteins (HmuU) and a solute-binding protein (HmuT).

It localises to the cell inner membrane. In terms of biological role, part of the ABC transporter complex HmuTUV involved in hemin import. Responsible for energy coupling to the transport system. This chain is Hemin import ATP-binding protein HmuV, found in Rhodopseudomonas palustris (strain BisA53).